Consider the following 331-residue polypeptide: Ketol-acid reductoisomerase (NADP(+)) (331 aa).

In terms of domain architecture, KARI N-terminal Rossmann spans Ala-2 to Thr-182. Residues Tyr-25 to Gln-28, Ser-51, Ser-53, and Asp-83 to Gln-86 each bind NADP(+). Residue His-108 is part of the active site. Residue Gly-134 participates in NADP(+) binding. One can recognise a KARI C-terminal knotted domain in the interval Thr-183–Thr-328. Residues Asp-191, Glu-195, Glu-227, and Glu-231 each coordinate Mg(2+). Ser-252 contacts substrate.

This sequence belongs to the ketol-acid reductoisomerase family. Requires Mg(2+) as cofactor.

The catalysed reaction is (2R)-2,3-dihydroxy-3-methylbutanoate + NADP(+) = (2S)-2-acetolactate + NADPH + H(+). It catalyses the reaction (2R,3R)-2,3-dihydroxy-3-methylpentanoate + NADP(+) = (S)-2-ethyl-2-hydroxy-3-oxobutanoate + NADPH + H(+). It participates in amino-acid biosynthesis; L-isoleucine biosynthesis; L-isoleucine from 2-oxobutanoate: step 2/4. The protein operates within amino-acid biosynthesis; L-valine biosynthesis; L-valine from pyruvate: step 2/4. Its function is as follows. Involved in the biosynthesis of branched-chain amino acids (BCAA). Catalyzes an alkyl-migration followed by a ketol-acid reduction of (S)-2-acetolactate (S2AL) to yield (R)-2,3-dihydroxy-isovalerate. In the isomerase reaction, S2AL is rearranged via a Mg-dependent methyl migration to produce 3-hydroxy-3-methyl-2-ketobutyrate (HMKB). In the reductase reaction, this 2-ketoacid undergoes a metal-dependent reduction by NADPH to yield (R)-2,3-dihydroxy-isovalerate. In Acaryochloris marina (strain MBIC 11017), this protein is Ketol-acid reductoisomerase (NADP(+)).